Consider the following 258-residue polypeptide: Imidazole glycerol phosphate synthase subunit HisF (258 aa).

Residues aspartate 12 and aspartate 131 contribute to the active site.

It belongs to the HisA/HisF family. In terms of assembly, heterodimer of HisH and HisF.

The protein resides in the cytoplasm. It catalyses the reaction 5-[(5-phospho-1-deoxy-D-ribulos-1-ylimino)methylamino]-1-(5-phospho-beta-D-ribosyl)imidazole-4-carboxamide + L-glutamine = D-erythro-1-(imidazol-4-yl)glycerol 3-phosphate + 5-amino-1-(5-phospho-beta-D-ribosyl)imidazole-4-carboxamide + L-glutamate + H(+). It functions in the pathway amino-acid biosynthesis; L-histidine biosynthesis; L-histidine from 5-phospho-alpha-D-ribose 1-diphosphate: step 5/9. Functionally, IGPS catalyzes the conversion of PRFAR and glutamine to IGP, AICAR and glutamate. The HisF subunit catalyzes the cyclization activity that produces IGP and AICAR from PRFAR using the ammonia provided by the HisH subunit. This chain is Imidazole glycerol phosphate synthase subunit HisF, found in Nocardioides sp. (strain ATCC BAA-499 / JS614).